The following is a 201-amino-acid chain: Adenylyl-sulfate kinase (201 aa).

Residue 35 to 42 (GLSGSGKS) participates in ATP binding. Residue serine 109 is the Phosphoserine intermediate of the active site.

Belongs to the APS kinase family.

It carries out the reaction adenosine 5'-phosphosulfate + ATP = 3'-phosphoadenylyl sulfate + ADP + H(+). The protein operates within sulfur metabolism; hydrogen sulfide biosynthesis; sulfite from sulfate: step 2/3. Its function is as follows. Catalyzes the synthesis of activated sulfate. The sequence is that of Adenylyl-sulfate kinase from Salmonella arizonae (strain ATCC BAA-731 / CDC346-86 / RSK2980).